Here is a 532-residue protein sequence, read N- to C-terminus: Phosphoenolpyruvate carboxykinase (ATP) (532 aa).

The substrate site is built by Arg-60, Tyr-194, and Lys-200. Residues Lys-200, His-219, and 237 to 245 contribute to the ATP site; that span reads GLSGTGKTT. Positions 200 and 219 each coordinate Mn(2+). Asp-258 contributes to the Mn(2+) binding site. 3 residues coordinate ATP: Glu-286, Arg-324, and Thr-449. Residue Arg-324 participates in substrate binding.

It belongs to the phosphoenolpyruvate carboxykinase (ATP) family. Requires Mn(2+) as cofactor.

The protein localises to the cytoplasm. The enzyme catalyses oxaloacetate + ATP = phosphoenolpyruvate + ADP + CO2. It participates in carbohydrate biosynthesis; gluconeogenesis. Functionally, involved in the gluconeogenesis. Catalyzes the conversion of oxaloacetate (OAA) to phosphoenolpyruvate (PEP) through direct phosphoryl transfer between the nucleoside triphosphate and OAA. The polypeptide is Phosphoenolpyruvate carboxykinase (ATP) (Ruegeria pomeroyi (strain ATCC 700808 / DSM 15171 / DSS-3) (Silicibacter pomeroyi)).